The chain runs to 77 residues: Large ribosomal subunit protein eL20 (77 aa).

Belongs to the eukaryotic ribosomal protein eL20 family. As to quaternary structure, part of the 50S ribosomal subunit. Binds 23S rRNA.

The sequence is that of Large ribosomal subunit protein eL20 from Pyrococcus horikoshii (strain ATCC 700860 / DSM 12428 / JCM 9974 / NBRC 100139 / OT-3).